A 159-amino-acid chain; its full sequence is 2-C-methyl-D-erythritol 2,4-cyclodiphosphate synthase (159 aa).

The a divalent metal cation site is built by D10 and H12. Residues 10–12 (DVH) and 36–37 (HS) each bind 4-CDP-2-C-methyl-D-erythritol 2-phosphate. H44 is a binding site for a divalent metal cation. 4-CDP-2-C-methyl-D-erythritol 2-phosphate contacts are provided by residues 58–60 (DIG), 134–137 (TTSE), F141, and R144.

It belongs to the IspF family. Homotrimer. A divalent metal cation is required as a cofactor.

The enzyme catalyses 4-CDP-2-C-methyl-D-erythritol 2-phosphate = 2-C-methyl-D-erythritol 2,4-cyclic diphosphate + CMP. It functions in the pathway isoprenoid biosynthesis; isopentenyl diphosphate biosynthesis via DXP pathway; isopentenyl diphosphate from 1-deoxy-D-xylulose 5-phosphate: step 4/6. Functionally, involved in the biosynthesis of isopentenyl diphosphate (IPP) and dimethylallyl diphosphate (DMAPP), two major building blocks of isoprenoid compounds. Catalyzes the conversion of 4-diphosphocytidyl-2-C-methyl-D-erythritol 2-phosphate (CDP-ME2P) to 2-C-methyl-D-erythritol 2,4-cyclodiphosphate (ME-CPP) with a corresponding release of cytidine 5-monophosphate (CMP). The protein is 2-C-methyl-D-erythritol 2,4-cyclodiphosphate synthase of Cereibacter sphaeroides (strain ATCC 17029 / ATH 2.4.9) (Rhodobacter sphaeroides).